The chain runs to 319 residues: Curved DNA-binding protein (319 aa).

The J domain maps to 5-69; sequence DYYKILGVEP…QKRAEFDEIR (65 aa).

The protein resides in the cytoplasm. It is found in the nucleoid. In terms of biological role, DNA-binding protein that preferentially recognizes a curved DNA sequence. It is probably a functional analog of DnaJ; displays overlapping activities with DnaJ, but functions under different conditions, probably acting as a molecular chaperone in an adaptive response to environmental stresses other than heat shock. Lacks autonomous chaperone activity; binds native substrates and targets them for recognition by DnaK. Its activity is inhibited by the binding of CbpM. This chain is Curved DNA-binding protein, found in Pseudomonas putida (strain ATCC 47054 / DSM 6125 / CFBP 8728 / NCIMB 11950 / KT2440).